Reading from the N-terminus, the 78-residue chain is ATP synthase subunit c (78 aa).

Transmembrane regions (helical) follow at residues 12-32 and 54-74; these read IGAG…GHVV and FIGI…ALLL.

Belongs to the ATPase C chain family. F-type ATPases have 2 components, F(1) - the catalytic core - and F(0) - the membrane proton channel. F(1) has five subunits: alpha(3), beta(3), gamma(1), delta(1), epsilon(1). F(0) has four main subunits: a(1), b(1), b'(1) and c(10-14). The alpha and beta chains form an alternating ring which encloses part of the gamma chain. F(1) is attached to F(0) by a central stalk formed by the gamma and epsilon chains, while a peripheral stalk is formed by the delta, b and b' chains.

The protein resides in the cellular chromatophore membrane. Functionally, f(1)F(0) ATP synthase produces ATP from ADP in the presence of a proton or sodium gradient. F-type ATPases consist of two structural domains, F(1) containing the extramembraneous catalytic core and F(0) containing the membrane proton channel, linked together by a central stalk and a peripheral stalk. During catalysis, ATP synthesis in the catalytic domain of F(1) is coupled via a rotary mechanism of the central stalk subunits to proton translocation. In terms of biological role, key component of the F(0) channel; it plays a direct role in translocation across the membrane. A homomeric c-ring of between 10-14 subunits forms the central stalk rotor element with the F(1) delta and epsilon subunits. This Rhodobacter capsulatus (Rhodopseudomonas capsulata) protein is ATP synthase subunit c.